The primary structure comprises 510 residues: MAPPKAASHRPAVRRKKSGTLVDSILDKYLNVRFFKYLLLEPAALPIVGLFVLLAELVINVVVIQRVPYTEIDWVAYMQECEGFLNGTTNYSLLRGDTGPLVYPAAFVYIYSALYYVTSHGTNVRLAQYIFAGIYLLQLALVLRLYSKSRKVPPYVLVLSAFTSYRIHSIYVLRLFNDPVAVLLLYAALNLFLDRRWTLGSTFFSLAVGVKMNILLFAPALLLFYLANLGLLRTILQLAVCGVIQLLLGAPFLLTHPVEYLRGSFDLGRIFEHKWTVNYRFLSRDVFENRTFHVSLLGLHLLLLLAFAKPIWTFFQSYVRLRRIEDQLQPQITQQNLQLKAQKRPKKVEKDKDKDQKKFTTEQQSFLKAFEKSLQKASGGKATPAPAQAEPERYGIHFDRCTQLALLPFFLCNLVGVACSRSLHYQFYVWYFHSLPYLAWSTPYSLGVRCLILGLIEYCWNTYPSTNFSSAALHFTHIILLAGVAKQLIQTMRINNAAKREQQEQQKKLQ.

The Cytoplasmic portion of the chain corresponds to 1–43 (MAPPKAASHRPAVRRKKSGTLVDSILDKYLNVRFFKYLLLEPA). The helical transmembrane segment at 44–64 (ALPIVGLFVLLAELVINVVVI) threads the bilayer. Topologically, residues 65–97 (QRVPYTEIDWVAYMQECEGFLNGTTNYSLLRGD) are lumenal. The helical transmembrane segment at 98–118 (TGPLVYPAAFVYIYSALYYVT) threads the bilayer. The Cytoplasmic segment spans residues 119 to 125 (SHGTNVR). The helical transmembrane segment at 126-146 (LAQYIFAGIYLLQLALVLRLY) threads the bilayer. Residues 147 to 171 (SKSRKVPPYVLVLSAFTSYRIHSIY) are Lumenal-facing. The helical transmembrane segment at 172-192 (VLRLFNDPVAVLLLYAALNLF) threads the bilayer. Residues 193-211 (LDRRWTLGSTFFSLAVGVK) are Cytoplasmic-facing. Residues 212 to 232 (MNILLFAPALLLFYLANLGLL) form a helical membrane-spanning segment. Residue Arg233 is a topological domain, lumenal. A helical transmembrane segment spans residues 234 to 254 (TILQLAVCGVIQLLLGAPFLL). At 255–294 (THPVEYLRGSFDLGRIFEHKWTVNYRFLSRDVFENRTFHV) the chain is on the cytoplasmic side. A helical transmembrane segment spans residues 295–315 (SLLGLHLLLLLAFAKPIWTFF). Residues 316 to 403 (QSYVRLRRIE…YGIHFDRCTQ (88 aa)) lie on the Lumenal side of the membrane. Residues 337–358 (LQLKAQKRPKKVEKDKDKDQKK) are disordered. The segment covering 348–358 (VEKDKDKDQKK) has biased composition (basic and acidic residues). The chain crosses the membrane as a helical span at residues 404–424 (LALLPFFLCNLVGVACSRSLH). Topologically, residues 425-426 (YQ) are cytoplasmic. The chain crosses the membrane as a helical span at residues 427–447 (FYVWYFHSLPYLAWSTPYSLG). At 448–464 (VRCLILGLIEYCWNTYP) the chain is on the lumenal side. A helical transmembrane segment spans residues 465-485 (STNFSSAALHFTHIILLAGVA). Residues 486–510 (KQLIQTMRINNAAKREQQEQQKKLQ) lie on the Cytoplasmic side of the membrane.

This sequence belongs to the glycosyltransferase ALG3 family.

It is found in the endoplasmic reticulum membrane. The enzyme catalyses an alpha-D-Man-(1-&gt;2)-alpha-D-Man-(1-&gt;2)-alpha-D-Man-(1-&gt;3)-[alpha-D-Man-(1-&gt;6)]-beta-D-Man-(1-&gt;4)-beta-D-GlcNAc-(1-&gt;4)-alpha-D-GlcNAc-diphospho-di-trans,poly-cis-dolichol + a di-trans,poly-cis-dolichyl beta-D-mannosyl phosphate = an alpha-D-Man-(1-&gt;2)-alpha-D-Man-(1-&gt;2)-alpha-D-Man-(1-&gt;3)-[alpha-D-Man-(1-&gt;3)-alpha-D-Man-(1-&gt;6)]-beta-D-Man-(1-&gt;4)-beta-D-GlcNAc-(1-&gt;4)-alpha-D-GlcNAc-diphospho-di-trans,poly-cis-dolichol + a di-trans,poly-cis-dolichyl phosphate + H(+). It participates in protein modification; protein glycosylation. Probable alpha-1,3-mannosyltransferase involved in the N-glycosylation pathway. Involved in glycosylation of the TNF receptor grnd, regulating its ligand affinity. Required for normal epithelial growth and architecture. Suppressor of JNK-dependent intestinal stem cell proliferation. In Drosophila melanogaster (Fruit fly), this protein is Dolichyl-P-Man:Man5GlcNAc2-PP-dolichol alpha-1,3-mannosyltransferase Alg3.